The chain runs to 146 residues: Decoration protein (146 aa).

Homotrimer. Interacts with the major capsid protein.

It localises to the virion. Cooperatively binds the expanded capsid, thereby stabilizing the mature capsid shell and allowing the large viral DNA to be packaged. Trimers of capsid decoration proteins molecules are located at local and icosahedral threefold axes and stabilize the expanded capsid, which shows increased spacing between capsomers. This chain is Decoration protein, found in Thermus thermophilus (Thermus thermophilus phage P23-45).